We begin with the raw amino-acid sequence, 490 residues long: Homoserine O-acetyltransferase (490 aa).

The region spanning 47 to 353 (NAILVCHALT…SQFGHDAFLI (307 aa)) is the AB hydrolase-1 domain. The Nucleophile role is filled by serine 152. Arginine 221 serves as a coordination point for substrate. Residues aspartate 315 and histidine 348 contribute to the active site. Substrate is bound at residue aspartate 349. CBS domains follow at residues 375–432 (MNTQ…YTSL) and 436–490 (MSSQ…GRGP).

It belongs to the AB hydrolase superfamily. MetX family. In terms of assembly, homodimer.

It is found in the cytoplasm. The catalysed reaction is L-homoserine + acetyl-CoA = O-acetyl-L-homoserine + CoA. The protein operates within amino-acid biosynthesis; L-methionine biosynthesis via de novo pathway; O-acetyl-L-homoserine from L-homoserine: step 1/1. Its function is as follows. Transfers an acetyl group from acetyl-CoA to L-homoserine, forming acetyl-L-homoserine. This chain is Homoserine O-acetyltransferase, found in Methanosphaerula palustris (strain ATCC BAA-1556 / DSM 19958 / E1-9c).